A 164-amino-acid chain; its full sequence is MKSVVTTVISAADAAGRFPSTSDLESVQGSIQRAAARLEAAEKLANNIDAVAKEAYNAAIKKYPYLNNAGEANSTDTFKAKCARDIKHYLRLIQYSLVVGGTGPLDEWGIAGQREVYRSLGLPTAPYVEALSYARNRGCSPRDLSPQALTEYNALLDYAINSLS.

2 residues coordinate (2R,3E)-phycoerythrobilin: cysteine 82 and cysteine 139.

The protein belongs to the phycobiliprotein family. In terms of assembly, heterodimer of an alpha and a beta chain. Post-translationally, contains two covalently linked bilin chromophores.

The protein localises to the cellular thylakoid membrane. Its function is as follows. Light-harvesting photosynthetic bile pigment-protein from the phycobiliprotein complex. The protein is C-phycoerythrin alpha chain (cpeA) of Pseudanabaena tenuis (strain PCC 7409).